Here is a 610-residue protein sequence, read N- to C-terminus: UvrABC system protein C (610 aa).

The GIY-YIG domain occupies 16–94 (SQPGVYRMYD…IKLYQPRYNV (79 aa)). Residues 204-239 (DQVLTQLIARMEKASQDLAFEEAARIRDQIQAVRRV) enclose the UVR domain.

Belongs to the UvrC family. As to quaternary structure, interacts with UvrB in an incision complex.

Its subcellular location is the cytoplasm. The UvrABC repair system catalyzes the recognition and processing of DNA lesions. UvrC both incises the 5' and 3' sides of the lesion. The N-terminal half is responsible for the 3' incision and the C-terminal half is responsible for the 5' incision. This Salmonella gallinarum (strain 287/91 / NCTC 13346) protein is UvrABC system protein C.